A 310-amino-acid polypeptide reads, in one-letter code: Cytosolic Fe-S cluster assembly factor Nubp1 homolog (310 aa).

[4Fe-4S] cluster is bound by residues Cys-8, Cys-22, Cys-25, and Cys-31. 62-69 (GKGGVGKS) contributes to the ATP binding site. [4Fe-4S] cluster contacts are provided by Cys-239 and Cys-242.

It belongs to the Mrp/NBP35 ATP-binding proteins family. NUBP1/NBP35 subfamily. Heterotetramer of 2 Nubp1 and 2 Nubp2 chains. The cofactor is [4Fe-4S] cluster.

It is found in the cytoplasm. In terms of biological role, component of the cytosolic iron-sulfur (Fe/S) protein assembly (CIA) machinery. Required for maturation of extramitochondrial Fe-S proteins. The Nubp1-Nubp2 heterotetramer forms a Fe-S scaffold complex, mediating the de novo assembly of an Fe-S cluster and its transfer to target apoproteins. The chain is Cytosolic Fe-S cluster assembly factor Nubp1 homolog from Drosophila ananassae (Fruit fly).